The sequence spans 302 residues: DDRGK domain-containing protein 1 (302 aa).

The Lumenal portion of the chain corresponds to 1-5 (MDGGG). Residues 6–26 (GMLGAVVCLLLVFAIFPLLLW) traverse the membrane as a helical segment. Residues 27–302 (RRRSDAAHRL…DENAAAGTEL (276 aa)) are Cytoplasmic-facing. Disordered regions lie at residues 36-151 (LPPQ…EEAR) and 279-302 (DLEP…GTEL). Acidic residues predominate over residues 79–91 (VDDADSDLEEEIQ). The span at 103 to 151 (KRQDREAQRQAEEAARDSRRTKQDRYAEMRRKKDEEREAQERLMEEEAR) shows a compositional bias: basic and acidic residues.

This sequence belongs to the DDRGK1 family.

The protein localises to the endoplasmic reticulum membrane. Its function is as follows. Substrate adapter for ufmylation, the covalent attachment of the ubiquitin-like modifier UFM1 to substrate proteins. In Oryza sativa subsp. japonica (Rice), this protein is DDRGK domain-containing protein 1.